The chain runs to 506 residues: MKKAEMGRFNISPDEDSSSYSSNSDFNYSYPTKQAALKSHYADVDPENQNFLLESNLGKKKYETDFHPGTTSFGMSVFNLSNAIVGSGILGLSYAMANTGIALFIILLTFVSIFSLYSVHLLLKTANEGGSLLYEQLGHKAFGMVGKLTASGSITMQNIGAMSSYLFIVKYELPLVIQALMNIEDTNGLWYLNGDYLVLLVSLVLILPLSLLRNLGYLGYTSGLSLLCMMFFLIVVIFKKFQISCPAEIAFLVNETVNSSLTQPATFLPDMGFNRTESDSCQPRYFIFNSQTVYAVPILTFSFVCHPAILPIYEELKGRSRRRMMNVSKISFFAMFLMYLLAALFGYLTFYGHVESELLHTYSSVMETDILLLIVRLAVLVAVTLTVPVVIFPIRSSITHLLCASKEFSWWRHSVITVSILVFTNLLVIFVPNIRDIFGFIGASAAAMLIFILPSAFYIKLVKKEPMKSVQKIGAMFFLLSGIVVMTGSMALIVLDWVHNAPGGGH.

The interval 1-23 is disordered; the sequence is MKKAEMGRFNISPDEDSSSYSSN. At 1 to 76 the chain is on the cytoplasmic side; the sequence is MKKAEMGRFN…HPGTTSFGMS (76 aa). The tract at residues 1 to 96 is regulates protein turnover upon amino acid deprivation; the sequence is MKKAEMGRFN…SGILGLSYAM (96 aa). S12, S21, S22, and S55 each carry phosphoserine. The helical transmembrane segment at 77-96 threads the bilayer; the sequence is VFNLSNAIVGSGILGLSYAM. Na(+) is bound at residue N82. Residues 97 to 102 are Extracellular-facing; sequence ANTGIA. The helical transmembrane segment at 103 to 123 threads the bilayer; it reads LFIILLTFVSIFSLYSVHLLL. Residues 124–158 lie on the Cytoplasmic side of the membrane; the sequence is KTANEGGSLLYEQLGHKAFGMVGKLTASGSITMQN. A helical transmembrane segment spans residues 159–177; that stretch reads IGAMSSYLFIVKYELPLVI. Over 178–188 the chain is Extracellular; it reads QALMNIEDTNG. The chain crosses the membrane as a helical span at residues 189 to 209; the sequence is LWYLNGDYLVLLVSLVLILPL. Topologically, residues 210-217 are cytoplasmic; that stretch reads SLLRNLGY. A helical transmembrane segment spans residues 218-238; sequence LGYTSGLSLLCMMFFLIVVIF. Residues 239–292 lie on the Extracellular side of the membrane; the sequence is KKFQISCPAEIAFLVNETVNSSLTQPATFLPDMGFNRTESDSCQPRYFIFNSQT. A disulfide bond links C245 and C281. N-linked (GlcNAc...) asparagine glycans are attached at residues N258 and N274. Residues 293 to 313 form a helical membrane-spanning segment; sequence VYAVPILTFSFVCHPAILPIY. The Cytoplasmic portion of the chain corresponds to 314-329; it reads EELKGRSRRRMMNVSK. The chain crosses the membrane as a helical span at residues 330-350; sequence ISFFAMFLMYLLAALFGYLTF. Residues 351–371 lie on the Extracellular side of the membrane; the sequence is YGHVESELLHTYSSVMETDIL. Residues 372-392 traverse the membrane as a helical segment; it reads LLIVRLAVLVAVTLTVPVVIF. Position 386 (T386) interacts with Na(+). Residues 393 to 413 are Cytoplasmic-facing; sequence PIRSSITHLLCASKEFSWWRH. A helical membrane pass occupies residues 414-434; sequence SVITVSILVFTNLLVIFVPNI. Topologically, residues 435 to 436 are extracellular; the sequence is RD. A helical membrane pass occupies residues 437-457; it reads IFGFIGASAAAMLIFILPSAF. Over 458–472 the chain is Cytoplasmic; that stretch reads YIKLVKKEPMKSVQK. Residues 473 to 495 traverse the membrane as a helical segment; it reads IGAMFFLLSGIVVMTGSMALIVL. The Extracellular segment spans residues 496-506; sequence DWVHNAPGGGH.

The protein belongs to the amino acid/polyamine transporter 2 family. Post-translationally, polyubiquitination by NEDD4L regulates the degradation and the activity of SLC38A2.

The protein resides in the cell membrane. The enzyme catalyses L-alanine(in) + Na(+)(in) = L-alanine(out) + Na(+)(out). It carries out the reaction glycine(in) + Na(+)(in) = glycine(out) + Na(+)(out). The catalysed reaction is L-serine(in) + Na(+)(in) = L-serine(out) + Na(+)(out). It catalyses the reaction L-proline(in) + Na(+)(in) = L-proline(out) + Na(+)(out). The enzyme catalyses L-methionine(in) + Na(+)(in) = L-methionine(out) + Na(+)(out). It carries out the reaction L-histidine(in) + Na(+)(in) = L-histidine(out) + Na(+)(out). The catalysed reaction is L-asparagine(in) + Na(+)(in) = L-asparagine(out) + Na(+)(out). It catalyses the reaction L-glutamine(in) + Na(+)(in) = L-glutamine(out) + Na(+)(out). The enzyme catalyses L-threonine(in) + Na(+)(in) = L-threonine(out) + Na(+)(out). It carries out the reaction L-leucine(in) + Na(+)(in) = L-leucine(out) + Na(+)(out). The catalysed reaction is L-phenylalanine(in) + Na(+)(in) = L-phenylalanine(out) + Na(+)(out). With respect to regulation, inhibited by N-methyl-D-glucamine. Inhibited by choline. Allosteric regulation of sodium ions binding by pH. In terms of biological role, symporter that cotransports neutral amino acids and sodium ions from the extracellular to the intracellular side of the cell membrane. The transport is pH-sensitive, Li(+)-intolerant, electrogenic, driven by the Na(+) electrochemical gradient and cotransports of neutral amino acids and sodium ions with a stoichiometry of 1:1. May function in the transport of amino acids at the blood-brain barrier. May function in the transport of amino acids in the supply of maternal nutrients to the fetus through the placenta. Maintains a key metabolic glutamine/glutamate balance underpinning retrograde signaling by dendritic release of the neurotransmitter glutamate. Transports L-proline in differentiating osteoblasts for the efficient synthesis of proline-enriched proteins and provides proline essential for osteoblast differentiation and bone formation during bone development. The polypeptide is Sodium-coupled neutral amino acid symporter 2 (Bos taurus (Bovine)).